Here is a 400-residue protein sequence, read N- to C-terminus: Acetate kinase (400 aa).

Mg(2+) is bound at residue Asn10. Lys17 contributes to the ATP binding site. Substrate is bound at residue Arg91. The active-site Proton donor/acceptor is Asp150. ATP-binding positions include 210–214 (HLGGG), 285–287 (DFR), and 333–337 (GIGEN). Glu387 contributes to the Mg(2+) binding site.

This sequence belongs to the acetokinase family. As to quaternary structure, homodimer. Requires Mg(2+) as cofactor. The cofactor is Mn(2+).

The protein localises to the cytoplasm. The enzyme catalyses acetate + ATP = acetyl phosphate + ADP. Its pathway is metabolic intermediate biosynthesis; acetyl-CoA biosynthesis; acetyl-CoA from acetate: step 1/2. Its function is as follows. Catalyzes the formation of acetyl phosphate from acetate and ATP. Can also catalyze the reverse reaction. The chain is Acetate kinase from Buchnera aphidicola subsp. Baizongia pistaciae (strain Bp).